Here is a 307-residue protein sequence, read N- to C-terminus: Taste receptor type 2 member 10 (307 aa).

Residues 1 to 6 lie on the Extracellular side of the membrane; that stretch reads MLRVVE. A helical membrane pass occupies residues 7–27; the sequence is GIFIFVVVSESVFGVLGNGFI. Topologically, residues 28-42 are cytoplasmic; that stretch reads GLVNCIDCAKNKLST. Residues 43-63 traverse the membrane as a helical segment; that stretch reads IGFILTGLAISRIFLIWIIIT. The Extracellular portion of the chain corresponds to 64–100; it reads DGFIQIFSPNIYASGNLIEYISYFWVIGNQSSMWFAT. N-linked (GlcNAc...) asparagine glycosylation occurs at N92. A helical transmembrane segment spans residues 101 to 121; that stretch reads SLSIFYFLKIANFSNYIFLWL. The Cytoplasmic segment spans residues 122-126; it reads KSRTN. The chain crosses the membrane as a helical span at residues 127-147; that stretch reads MVLPFMIVFLLISSLLNFAYI. Over 148 to 179 the chain is Extracellular; it reads AKILNDYKTKNDTVWDLNMYKSEYFIKQILLN. Residue N158 is glycosylated (N-linked (GlcNAc...) asparagine). The helical transmembrane segment at 180-200 threads the bilayer; it reads LGVIFFFTLSLITCIFLIISL. Topologically, residues 201 to 227 are cytoplasmic; it reads WRHNRQMQSNVTGLRDSNTEAHVKAMK. The chain crosses the membrane as a helical span at residues 228-248; the sequence is VLISFIILFILYFIGMAIEIS. Residues 249 to 257 lie on the Extracellular side of the membrane; it reads CFTVRENKL. A helical membrane pass occupies residues 258–278; it reads LLMFGMTTTAIYPWGHSFILI. The Cytoplasmic portion of the chain corresponds to 279-307; it reads LGNSKLKQASLRVLQQLKCCEKRKNLRVT.

It belongs to the G-protein coupled receptor T2R family. In terms of tissue distribution, expressed in subsets of taste receptor cells of the tongue and palate epithelium and exclusively in gustducin-positive cells.

It localises to the membrane. Its function is as follows. Gustducin-coupled strychnine receptor implicated in the perception of bitter compounds in the oral cavity and the gastrointestinal tract. Signals through PLCB2 and the calcium-regulated cation channel TRPM5. The chain is Taste receptor type 2 member 10 (TAS2R10) from Homo sapiens (Human).